A 591-amino-acid chain; its full sequence is L-fucose isomerase (591 aa).

Active-site proton acceptor residues include E337 and D361. The Mn(2+) site is built by E337, D361, and H528.

The protein belongs to the L-fucose isomerase family. In terms of assembly, homohexamer. Mn(2+) serves as cofactor.

Its subcellular location is the cytoplasm. It catalyses the reaction L-fucose = L-fuculose. It participates in carbohydrate degradation; L-fucose degradation; L-lactaldehyde and glycerone phosphate from L-fucose: step 1/3. In terms of biological role, converts the aldose L-fucose into the corresponding ketose L-fuculose. This chain is L-fucose isomerase, found in Escherichia coli (strain 55989 / EAEC).